Here is a 367-residue protein sequence, read N- to C-terminus: Protein SUPPRESSOR OF FRI 4 (367 aa).

A BED-type zinc finger spans residues 7 to 66 (RATEKVWCYYCDREFDDEKILVQHQKAKHFKCHVCHKKLSTASGMVIHVLQVHKENVTKV). Cys38, Cys41, His54, and His59 together coordinate Zn(2+). Positions 246 to 309 (PFSAPLPVGG…PPVIANKAPS (64 aa)) are disordered. Over residues 273–295 (PNNSIPGGTNAHSYASGPNTSGP) the composition is skewed to polar residues.

In terms of assembly, homodimer. Component of the transcription activator complex FRI-C composed of FRI, FRL1, SUF4, FLX and FES1. Interacts with LD, ASHH2, FRL1, (via C-terminus) with FRI (via C-terminus), and with SWC6, a component of the SWR1 chromatin-remodeling complex. Binds to MED18 to regulate flowering time; recruits MED18 to FLC promoter. Expressed in root, shoot apex, leaves, stem and flowers. Expressed in expanding leaves, in the vasculature of fully expanded leaves, in the inflorescence, throughout young floral primordia, in the carpels of older flowers and in fertilized ovules.

It is found in the nucleus. Functionally, sequence-specific DNA binding factor that recognizes the 5'-CCAAATTTTAAGTTT-3' sequence. Recruits the FRI-C complex to the FLC promoter. Required for FRI-mediated FLC activation, but has no effect on the expression of MAF1, MAF2, MAF3, MAF5, UFC and CO. Dispensable for the reactivation of FLC in early embryogenesis, but required to maintain high levels of FLC expression in later embryonic and vegetative development. In Arabidopsis thaliana (Mouse-ear cress), this protein is Protein SUPPRESSOR OF FRI 4.